The chain runs to 396 residues: 12-oxophytodienoate reductase 3 (396 aa).

FMN is bound by residues 31–33, Gly64, and Gln106; that span reads PMT. 185 to 188 provides a ligand contact to substrate; that stretch reads HGAH. The active-site Proton donor is the Tyr190. Residue Arg237 participates in FMN binding. Arg283 contributes to the substrate binding site. Residues Gly321 and 342 to 343 contribute to the FMN site; that span reads GR. The FMN stretch occupies residues 342 to 343; that stretch reads GR. The Microbody targeting signal signature appears at 394–396; it reads SRL.

The protein belongs to the NADH:flavin oxidoreductase/NADH oxidase family. It depends on FMN as a cofactor. In terms of tissue distribution, expressed in roots and to a lower extent in leaves and flowers.

It is found in the peroxisome. It catalyses the reaction (1S,2S)-OPC-8 + NADP(+) = (9S,13S,15Z)-12-oxophyto-10,15-dienoate + NADPH + H(+). Its pathway is lipid metabolism; oxylipin biosynthesis. Functionally, specifically cleaves olefinic bonds in cyclic enones. Involved in the biosynthesis of jasmonic acid (JA) and perhaps in biosynthesis or metabolism of other oxylipin signaling moleclules. It is required for the spatial and temporal regulation of JA levels during dehiscence of anthers, promoting the stomium degeneration program. In vitro, reduces 9S,13S-12-oxophytodienoic acid (9S,13S-OPDA) and 9R,13R-OPDA to 9S,13S-OPC-8:0 and 9R,13R-OPC-8:0, respectively. This chain is 12-oxophytodienoate reductase 3 (OPR3), found in Solanum lycopersicum (Tomato).